Consider the following 259-residue polypeptide: uncharacterized protein (259 aa).

A disordered region spans residues 171–259 (LSKMPVPQSP…SYSTYEDDDF (89 aa)). Polar residues predominate over residues 179 to 201 (SPSVPTMPSVNNDQPTQKPNKIT). The span at 202–211 (RNYKPKHQHN) shows a compositional bias: basic residues. Positions 212-236 (YKPNYQPNYQPNYGQNCSNSHSNDY) are enriched in polar residues.

It localises to the virion. This is an uncharacterized protein from Acanthamoeba polyphaga (Amoeba).